A 418-amino-acid polypeptide reads, in one-letter code: Deubiquitinase and deneddylase Dub1 (418 aa).

Polar residues predominate over residues 1 to 10 (MLSPTNSISK). The segment at 1–23 (MLSPTNSISKTVPAPPQDSSKPV) is disordered. Residues 40–60 (TALAVLLVVVTLGLILLFYSF) form a helical membrane-spanning segment. Residues 75-145 (STKEHPTISI…LPPKAPKPVK (71 aa)) are disordered. Over residues 86 to 141 (EPLPSPPLAVPRPSTPPPPVISRPSTPPAPTPAISPPSTPSAPKPSTPPPLPPKAP) the composition is skewed to pro residues. Active-site residues include H288, D305, and C358.

Belongs to the peptidase C48 family.

It is found in the secreted. The protein resides in the host cell. Its subcellular location is the membrane. Functionally, effector proteins function to alter host cell physiology and promote bacterial survival in host tissues. This protease possesses deubiquitinating and deneddylating activities. The sequence is that of Deubiquitinase and deneddylase Dub1 (cdu1) from Chlamydia trachomatis serovar A (strain ATCC VR-571B / DSM 19440 / HAR-13).